We begin with the raw amino-acid sequence, 137 residues long: Large ribosomal subunit protein uL16 (137 aa).

The protein belongs to the universal ribosomal protein uL16 family. In terms of assembly, part of the 50S ribosomal subunit.

Functionally, binds 23S rRNA and is also seen to make contacts with the A and possibly P site tRNAs. The sequence is that of Large ribosomal subunit protein uL16 from Pseudomonas paraeruginosa (strain DSM 24068 / PA7) (Pseudomonas aeruginosa (strain PA7)).